The chain runs to 138 residues: Small ribosomal subunit protein uS11c (138 aa).

A disordered region spans residues Met1–Arg24. The span at Gly9–Arg24 shows a compositional bias: basic residues.

Belongs to the universal ribosomal protein uS11 family. As to quaternary structure, part of the 30S ribosomal subunit.

The protein localises to the plastid. Its subcellular location is the chloroplast. In Gossypium hirsutum (Upland cotton), this protein is Small ribosomal subunit protein uS11c.